The chain runs to 307 residues: Cysteine synthase (307 aa).

Lys-42 bears the N6-(pyridoxal phosphate)lysine mark. Pyridoxal 5'-phosphate is bound by residues Asn-72, Gly-176–His-180, and Ser-263.

It belongs to the cysteine synthase/cystathionine beta-synthase family. Pyridoxal 5'-phosphate is required as a cofactor.

The enzyme catalyses O-acetyl-L-serine + hydrogen sulfide = L-cysteine + acetate. It functions in the pathway amino-acid biosynthesis; L-cysteine biosynthesis; L-cysteine from L-serine: step 2/2. The sequence is that of Cysteine synthase (cysK) from Flavobacterium sp. (strain K3-15 / DSM ID92-509).